The chain runs to 117 residues: Iron-sulfur cluster insertion protein ErpA (117 aa).

The iron-sulfur cluster site is built by Cys-45, Cys-109, and Cys-111.

It belongs to the HesB/IscA family. In terms of assembly, homodimer. Iron-sulfur cluster is required as a cofactor.

Functionally, required for insertion of 4Fe-4S clusters for at least IspG. The chain is Iron-sulfur cluster insertion protein ErpA from Hahella chejuensis (strain KCTC 2396).